The chain runs to 967 residues: A disintegrin and metalloproteinase with thrombospondin motifs 1 (967 aa).

Disordered stretches follow at residues 1–27 (MQRAVPEGFGRRKLGSDMGNAERAPGS) and 192–250 (GDVG…SIRK). Positions 1-49 (MQRAVPEGFGRRKLGSDMGNAERAPGSRSFGPVPTLLLLAAALLAVSDA) are cleaved as a signal peptide. Residues 50–252 (LGRPSEEDEE…TGTGSIRKKR (203 aa)) constitute a propeptide that is removed on maturation. The Cysteine switch motif lies at 196–203 (GTCGVVDD). Residue C198 coordinates Zn(2+). The span at 203–212 (DEPRPTGKAE) shows a compositional bias: basic and acidic residues. Acidic residues predominate over residues 213-226 (TEDEDEGTEGEDEG). A Peptidase M12B domain is found at 258–467 (RYVETMLVAD…GHGECLMDKP (210 aa)). E261, D344, and D351 together coordinate Ca(2+). 4 disulfides stabilise this stretch: C333/C385, C362/C367, C379/C462, and C417/C446. H401 contacts Zn(2+). The active site involves E402. Zn(2+)-binding residues include H405 and H411. Ca(2+) is bound by residues C462 and D465. Positions 476–559 (DLPGTSYDAN…DRKHFDTPFH (84 aa)) constitute a Disintegrin domain. Disulfide bonds link C488/C511, C499/C521, C506/C540, and C534/C545. N-linked (GlcNAc...) asparagine glycosylation occurs at N547. One can recognise a TSP type-1 1 domain in the interval 559–614 (HGSWGMWGPWGDCSRTCGGGVQYTMRECDNPVPKNGGKYCEGKRVRYRSCNLEDCP). 3 cysteine pairs are disulfide-bonded: C571-C608, C575-C613, and C586-C598. 2 N-linked (GlcNAc...) asparagine glycosylation sites follow: N720 and N764. Residues 725–849 (KKISGSVTSA…YFVKKKKESF (125 aa)) form a spacer region. TSP type-1 domains are found at residues 854–905 (TFSA…RPCA) and 908–967 (PCPQ…AECS).

Requires Zn(2+) as cofactor. Post-translationally, the precursor is cleaved by a furin endopeptidase. Glycosylated. Can be O-fucosylated by POFUT2 on a serine or a threonine residue found within the consensus sequence C1-X(2)-(S/T)-C2-G of the TSP type-1 repeat domains where C1 and C2 are the first and second cysteine residue of the repeat, respectively. Fucosylated repeats can then be further glycosylated by the addition of a beta-1,3-glucose residue by the glucosyltransferase, B3GALTL. Fucosylation mediates the efficient secretion of ADAMTS family members. Can also be C-glycosylated with one or two mannose molecules on tryptophan residues within the consensus sequence W-X-X-W of the TPRs, and N-glycosylated. These other glycosylations can also facilitate secretion.

The protein resides in the secreted. It is found in the extracellular space. Its subcellular location is the extracellular matrix. In terms of biological role, metalloprotease which cleaves aggrecan, a cartilage proteoglycan, at the '1938-Glu-|-Leu-1939' site (within the chondroitin sulfate attachment domain), and may be involved in its turnover. Also cleaves COMP. Has angiogenic inhibitor activity. May play a critical role in follicular rupture. This is A disintegrin and metalloproteinase with thrombospondin motifs 1 (ADAMTS1) from Homo sapiens (Human).